The primary structure comprises 123 residues: Ig heavy chain V region HPCG13 (123 aa).

One can recognise an Ig-like domain in the interval 1-114 (EVKLVESGGG…GSYWYFDVWG (114 aa)).

This chain is Ig heavy chain V region HPCG13, found in Mus musculus (Mouse).